Reading from the N-terminus, the 175-residue chain is NAD(P)H-quinone oxidoreductase subunit J (175 aa).

Belongs to the complex I 30 kDa subunit family. NDH-1 can be composed of about 15 different subunits; different subcomplexes with different compositions have been identified which probably have different functions.

The protein localises to the cellular thylakoid membrane. It carries out the reaction a plastoquinone + NADH + (n+1) H(+)(in) = a plastoquinol + NAD(+) + n H(+)(out). The catalysed reaction is a plastoquinone + NADPH + (n+1) H(+)(in) = a plastoquinol + NADP(+) + n H(+)(out). Functionally, NDH-1 shuttles electrons from an unknown electron donor, via FMN and iron-sulfur (Fe-S) centers, to quinones in the respiratory and/or the photosynthetic chain. The immediate electron acceptor for the enzyme in this species is believed to be plastoquinone. Couples the redox reaction to proton translocation, and thus conserves the redox energy in a proton gradient. Cyanobacterial NDH-1 also plays a role in inorganic carbon-concentration. In Nostoc sp. (strain PCC 7120 / SAG 25.82 / UTEX 2576), this protein is NAD(P)H-quinone oxidoreductase subunit J.